We begin with the raw amino-acid sequence, 155 residues long: Small ribosomal subunit protein uS7c (155 aa).

Belongs to the universal ribosomal protein uS7 family. Part of the 30S ribosomal subunit.

The protein resides in the plastid. It is found in the chloroplast. Its function is as follows. One of the primary rRNA binding proteins, it binds directly to 16S rRNA where it nucleates assembly of the head domain of the 30S subunit. The chain is Small ribosomal subunit protein uS7c (rps7) from Saururus cernuus (Lizard's tail).